A 111-amino-acid chain; its full sequence is Universal stress protein B (111 aa).

2 helical membrane-spanning segments follow: residues 1–21 (MIST…NMAR) and 90–110 (FILT…LLIW).

It belongs to the universal stress protein B family.

It localises to the cell inner membrane. In Escherichia fergusonii (strain ATCC 35469 / DSM 13698 / CCUG 18766 / IAM 14443 / JCM 21226 / LMG 7866 / NBRC 102419 / NCTC 12128 / CDC 0568-73), this protein is Universal stress protein B.